We begin with the raw amino-acid sequence, 389 residues long: E3 ubiquitin-protein ligase E3D (389 aa).

At Ala-2 the chain carries N-acetylalanine. Residues 129–159 (PLPGDNWGALVDEWCCHPDPFANKPLHPREN) carry the BRAT1-like motif motif. Zn(2+) is bound at residue Cys-144. An interaction with UBE2C region spans residues 235–257 (LPSERNFPIIPRSQFVQSVLAQC). Residues 353–389 (LPSTTCLELLLILSKSNATLPPSLRCMNSFQVAFLKM) are HECT-like.

As to quaternary structure, interacts with UBE2C/UbcH10 (E2 ubiquitin-conjugating enzyme). In vitro, interacts with cyclin-B. Ubiquitinated by UBCH10 (E2 ubiquitin-conjugating enzyme).

It is found in the cytoplasm. The enzyme catalyses S-ubiquitinyl-[E2 ubiquitin-conjugating enzyme]-L-cysteine + [acceptor protein]-L-lysine = [E2 ubiquitin-conjugating enzyme]-L-cysteine + N(6)-ubiquitinyl-[acceptor protein]-L-lysine.. The protein operates within protein modification; protein ubiquitination. Functionally, E3 ubiquitin-protein ligase which accepts ubiquitin from specific E2 ubiquitin-conjugating enzymes, and transfers it to substrates, generally promoting their degradation by the proteasome. Independently of its E3 ubiquitin-protein ligase activity, acts as an inhibitor of CPSF3 endonuclease activity by blocking CPSF3 active site. The chain is E3 ubiquitin-protein ligase E3D (UBE3D) from Bos taurus (Bovine).